The chain runs to 353 residues: uncharacterized protein (353 aa).

Disordered regions lie at residues 1–24 (MSTSRNVPNKKNNTKQQKYQQQSQ), 245–280 (NKSSNRTHHKSGDKSTVKSTDKQVEKKVEESSEKVP), and 305–353 (AAGK…DLNN). The span at 9-24 (NKKNNTKQQKYQQQSQ) shows a compositional bias: low complexity. Over residues 254 to 280 (KSGDKSTVKSTDKQVEKKVEESSEKVP) the composition is skewed to basic and acidic residues. Residues 321 to 332 (VTTSTSESTVEV) show a composition bias toward low complexity. Residues 342–353 (EPDEEVFEDLNN) show a composition bias toward acidic residues.

This is an uncharacterized protein from Acanthamoeba polyphaga mimivirus (APMV).